The chain runs to 309 residues: uncharacterized protein (309 aa).

A disordered region spans residues 272-291; sequence PSLDAPSETVEAFPEPQKNL.

This is an uncharacterized protein from Bacillus subtilis (strain 168).